Here is a 442-residue protein sequence, read N- to C-terminus: Phosphoglucosamine mutase (442 aa).

The Phosphoserine intermediate role is filled by S98. 4 residues coordinate Mg(2+): S98, D236, D238, and D240. Position 98 is a phosphoserine (S98).

The protein belongs to the phosphohexose mutase family. Mg(2+) is required as a cofactor. Activated by phosphorylation.

It catalyses the reaction alpha-D-glucosamine 1-phosphate = D-glucosamine 6-phosphate. In terms of biological role, catalyzes the conversion of glucosamine-6-phosphate to glucosamine-1-phosphate. The chain is Phosphoglucosamine mutase from Natranaerobius thermophilus (strain ATCC BAA-1301 / DSM 18059 / JW/NM-WN-LF).